The sequence spans 305 residues: GMP synthase [glutamine-hydrolyzing] subunit B (305 aa).

One can recognise a GMPS ATP-PPase domain in the interval 2–184 (VNTERFIQQA…LGLPREIQHR (183 aa)). 29–35 (SGGVDSS) lines the ATP pocket.

Heterodimer composed of a glutamine amidotransferase subunit (A) and a GMP-binding subunit (B).

The enzyme catalyses XMP + L-glutamine + ATP + H2O = GMP + L-glutamate + AMP + diphosphate + 2 H(+). Its pathway is purine metabolism; GMP biosynthesis; GMP from XMP (L-Gln route): step 1/1. Its function is as follows. Catalyzes the synthesis of GMP from XMP. In Methanosphaerula palustris (strain ATCC BAA-1556 / DSM 19958 / E1-9c), this protein is GMP synthase [glutamine-hydrolyzing] subunit B.